The sequence spans 336 residues: Inactive serine/threonine-protein kinase BKN2 (336 aa).

Positions 1–25 are disordered; it reads MGNCLKPLKEQPPSASPKPLTIPSS. A lipid anchor (N-myristoyl glycine) is attached at Gly2. Cys4 is lipidated: S-palmitoyl cysteine. The Protein kinase domain occupies 52 to 332; the sequence is YMVIKGNDNG…QVFDGLNDIA (281 aa).

This sequence belongs to the protein kinase superfamily. Ser/Thr protein kinase family. Component of an immune signaling complex made of, at least, SZE1, BKN2/SZE2, ZAR1 and ZED1. Interacts directly with ZAR1 and Pseudomonas syringae HOPZ1A at the plasma membrane. In terms of processing, N-terminal myristoylation is critical for plasma membrane localization and implication in defense responses. Expressed in stigma and ovaries in flowers, and in stems and seedlings.

It localises to the cell membrane. Functionally, together with SZE1 and ZED1, required for effector-triggered immunity (e.g. Pseudomonas syringae type III effector HopZ1a) via the activation of ZAR1, thus being essential for resistance against P. syringae pv. tomato DC3000 expressing HopZ1a. Collaboratively with BKN1, involved in compatible pollen-stigma interactions. In Arabidopsis thaliana (Mouse-ear cress), this protein is Inactive serine/threonine-protein kinase BKN2.